The following is a 287-amino-acid chain: Elongation factor Ts (287 aa).

The involved in Mg(2+) ion dislocation from EF-Tu stretch occupies residues 77–80; sequence TDFV.

The protein belongs to the EF-Ts family.

Its subcellular location is the cytoplasm. Functionally, associates with the EF-Tu.GDP complex and induces the exchange of GDP to GTP. It remains bound to the aminoacyl-tRNA.EF-Tu.GTP complex up to the GTP hydrolysis stage on the ribosome. The protein is Elongation factor Ts of Wolbachia sp. subsp. Brugia malayi (strain TRS).